Reading from the N-terminus, the 332-residue chain is Biotin synthase (332 aa).

One can recognise a Radical SAM core domain in the interval 53–282 (HFGKKVKLNM…TKEIRISGGR (230 aa)). [4Fe-4S] cluster contacts are provided by C71, C75, and C78. [2Fe-2S] cluster contacts are provided by C115, C147, C207, and R277.

It belongs to the radical SAM superfamily. Biotin synthase family. As to quaternary structure, homodimer. It depends on [4Fe-4S] cluster as a cofactor. [2Fe-2S] cluster serves as cofactor.

The enzyme catalyses (4R,5S)-dethiobiotin + (sulfur carrier)-SH + 2 reduced [2Fe-2S]-[ferredoxin] + 2 S-adenosyl-L-methionine = (sulfur carrier)-H + biotin + 2 5'-deoxyadenosine + 2 L-methionine + 2 oxidized [2Fe-2S]-[ferredoxin]. The protein operates within cofactor biosynthesis; biotin biosynthesis; biotin from 7,8-diaminononanoate: step 2/2. Functionally, catalyzes the conversion of dethiobiotin (DTB) to biotin by the insertion of a sulfur atom into dethiobiotin via a radical-based mechanism. The protein is Biotin synthase of Bacillus cereus (strain ATCC 10987 / NRS 248).